The primary structure comprises 127 residues: Secreted RxLR effector protein 7 (127 aa).

The N-terminal stretch at 1-21 (MRSAYYVLTALLVVASSQVAA) is a signal peptide. Residues 48–65 (RFLRESRDVHGNVANEER) carry the RxLR-dEER motif.

The protein belongs to the RxLR effector family.

The protein resides in the secreted. It is found in the host nucleus. Its subcellular location is the host cytoplasm. Its function is as follows. Secreted effector that completely suppresses the host cell death induced by cell death-inducing proteins. The sequence is that of Secreted RxLR effector protein 7 from Plasmopara viticola (Downy mildew of grapevine).